We begin with the raw amino-acid sequence, 336 residues long: MKDRYILAFETSCDETSVAVLKNDDELLSNVIASQIESHKRFGGVVPEVASRHHVEVITACIEEALAEAGITEEDVTAVAVTYGPGLVGALLVGLSAAKTFAWAHGLPLIPVNHMAGHLMAAQSVEPLEFPLLALLVSGGHTELVYVSEAGDYKIVGETRDDAVGEAYDKVGRVMGLTYPAGREIDELAHQGQDIYDFPRAMIKEDNLEFSFSGLKSAFINLYHNAEQKGESLSTEDLCASFQAAVMDILMAKTKKALEKYPVKTLVVAGGVAANKGLRERLAAEITDVKVIIPPLRLCGDNAGMIAYASVSEWNKENFAGWDLNAKPSLAFDTME.

Fe cation is bound by residues His114 and His118. Residues 136-140, Asp169, Gly182, Asp186, and Asn275 contribute to the substrate site; that span reads LVSGG. Asp301 contacts Fe cation.

This sequence belongs to the KAE1 / TsaD family. It depends on Fe(2+) as a cofactor.

The protein localises to the cytoplasm. It catalyses the reaction L-threonylcarbamoyladenylate + adenosine(37) in tRNA = N(6)-L-threonylcarbamoyladenosine(37) in tRNA + AMP + H(+). Its function is as follows. Required for the formation of a threonylcarbamoyl group on adenosine at position 37 (t(6)A37) in tRNAs that read codons beginning with adenine. Is involved in the transfer of the threonylcarbamoyl moiety of threonylcarbamoyl-AMP (TC-AMP) to the N6 group of A37, together with TsaE and TsaB. TsaD likely plays a direct catalytic role in this reaction. This is tRNA N6-adenosine threonylcarbamoyltransferase from Streptococcus pneumoniae (strain Taiwan19F-14).